Here is a 306-residue protein sequence, read N- to C-terminus: Anamorsin (306 aa).

Positions 6 to 172 are N-terminal SAM-like domain; the sequence is IAPGQRVAVI…KPNFEVGSSS (167 aa). The tract at residues 173-224 is linker; it reads QLKLSFAKKTSPSGKPSVDPATAKLWTLSASDMNDEEMDLLDSDELLDSEDL. Residues Cys237, Cys246, Cys249, and Cys251 each contribute to the [2Fe-2S] cluster site. Residues 237–251 are fe-S binding site A; the sequence is CKEKGKKKACKNCTC. Cys270, Cys273, Cys281, and Cys284 together coordinate [4Fe-4S] cluster. 2 short sequence motifs (cx2C motif) span residues 270-273 and 281-284; these read CGNC and CASC. The segment at 270-284 is fe-S binding site B; the sequence is CGNCYLGDAFRCASC.

It belongs to the anamorsin family. In terms of assembly, monomer. Interacts with NDOR1. Interacts with CHCHD4. Requires [2Fe-2S] cluster as cofactor. [4Fe-4S] cluster serves as cofactor.

The protein localises to the cytoplasm. Its subcellular location is the nucleus. It localises to the mitochondrion intermembrane space. Component of the cytosolic iron-sulfur (Fe-S) protein assembly (CIA) machinery required for the maturation of extramitochondrial Fe-S proteins. Part of an electron transfer chain functioning in an early step of cytosolic Fe-S biogenesis, facilitating the de novo assembly of a [4Fe-4S] cluster on the scaffold complex NUBP1-NUBP2. Electrons are transferred to CIAPIN1 from NADPH via the FAD- and FMN-containing protein NDOR1. NDOR1-CIAPIN1 are also required for the assembly of the diferric tyrosyl radical cofactor of ribonucleotide reductase (RNR), probably by providing electrons for reduction during radical cofactor maturation in the catalytic small subunit. Has anti-apoptotic effects in the cell. Involved in negative control of cell death upon cytokine withdrawal. Promotes development of hematopoietic cells. The chain is Anamorsin from Gallus gallus (Chicken).